The primary structure comprises 217 residues: Peptide deformylase (217 aa).

2 residues coordinate Fe cation: Cys-91 and His-133. Glu-134 is a catalytic residue. A Fe cation-binding site is contributed by His-137. Residues 153–217 are disordered; sequence VSEDGEEEEE…RRGSAAAKEE (65 aa). Residues 155 to 176 are compositionally biased toward acidic residues; sequence EDGEEEEEAEVAEVMPEPEAEG. A compositionally biased stretch (low complexity) spans 177–192; it reads AGEPSAEGAGQAAAEA. The segment covering 206 to 217 has biased composition (basic and acidic residues); the sequence is GERRGSAAAKEE.

Belongs to the polypeptide deformylase family. It depends on Fe(2+) as a cofactor.

The enzyme catalyses N-terminal N-formyl-L-methionyl-[peptide] + H2O = N-terminal L-methionyl-[peptide] + formate. In terms of biological role, removes the formyl group from the N-terminal Met of newly synthesized proteins. Requires at least a dipeptide for an efficient rate of reaction. N-terminal L-methionine is a prerequisite for activity but the enzyme has broad specificity at other positions. The chain is Peptide deformylase from Symbiobacterium thermophilum (strain DSM 24528 / JCM 14929 / IAM 14863 / T).